Consider the following 555-residue polypeptide: Galectin-3-binding protein (555 aa).

A signal peptide spans 1–18; the sequence is MAPLRLFWIWLLVVGTRG. Residues 24–124 enclose the SRCR domain; that stretch reads MRLADGGSAN…HDKDASVICT (101 aa). 3 disulfide bridges follow: Cys49/Cys113, Cys62/Cys123, and Cys93/Cys103. A glycan (N-linked (GlcNAc...) asparagine) is linked at Asn69. N-linked (GlcNAc...) asparagine glycosylation occurs at Asn125. The region spanning 153–221 is the BTB domain; sequence CDLFITVKVR…LYSRRIDVSL (69 aa). The BACK domain maps to 260-360; the sequence is PLELYAYALA…MPPQDLFSLQ (101 aa). N-linked (GlcNAc...) asparagine glycosylation is found at Asn362, Asn398, and Asn550.

Homodimers and homomultimers. The multimers form ring-like structures with a diameter of 30-40 nm. Binds LGALS1 and LGALS3. Binds ITGB1, COL4A1, COL5A1, COL6A1, FN1 and NID. Interacts with the gamma-tubulin ring complex (gamma-TuRC), composed of gamma-tubulin, TUBGCP2, TUBGCP3, TUBGCP4, TUBGCP5 and TUBGCP6. The unglycosylated form interacts with PDE4DIP; this interaction, which is PDE4DIP isoform-specific, may connect a pericentrosomal complex, made of AKAP9, CDK5RAP2, EB1/MAPRE1 and PDE4DIP, to the gamma-tubulin ring complex (gamma-TuRC) to promote microtubule assembly and acetylation.

Its subcellular location is the secreted. It is found in the extracellular space. The protein resides in the extracellular matrix. Functionally, promotes integrin-mediated cell adhesion. May stimulate host defense against viruses and tumor cells. This chain is Galectin-3-binding protein (LGALS3BP), found in Bos taurus (Bovine).